The sequence spans 707 residues: MAP kinase-interacting serine/threonine-protein kinase mnk-1 (707 aa).

Over residues 1 to 24 (MFFLDNTDSMTSSSRGITMPNTIS) the composition is skewed to polar residues. 2 disordered regions span residues 1-29 (MFFL…HEDV) and 101-131 (RQRE…YVGR). The Protein kinase domain occupies 203–493 (KLTDEHLGSG…ADQILSHRWL (291 aa)). ATP-binding positions include 209–217 (LGSGAYGSV) and Lys232. Asp325 (proton acceptor) is an active-site residue. 2 disordered regions span residues 589-628 (RSGE…SADD) and 688-707 (FEDE…QVNV).

It belongs to the protein kinase superfamily. CAMK Ser/Thr protein kinase family. It depends on Mg(2+) as a cofactor. In terms of tissue distribution, expressed in pharynx, intestine, vulva and body wall muscles.

It localises to the nucleus. Its subcellular location is the cytoplasm. It carries out the reaction L-seryl-[protein] + ATP = O-phospho-L-seryl-[protein] + ADP + H(+). The catalysed reaction is L-threonyl-[protein] + ATP = O-phospho-L-threonyl-[protein] + ADP + H(+). Serine/threonine-protein kinase which is required in the germline to positively regulate lifespan. May play a role in body wall muscle contraction. May be involved in embryonic cytokinesis. The chain is MAP kinase-interacting serine/threonine-protein kinase mnk-1 from Caenorhabditis elegans.